Here is a 916-residue protein sequence, read N- to C-terminus: MYKNEFNSSWMSSFNSSYIDNLYNKFLLDPTSIDNSWYIVFTELSKENYINSTNKYLNNKFQDSKDTIKLTIELLINIFRTLGYKFAHLNPLDTFKNDNSLSLKKFLKSSEAFRIQDSYLVKLSQYVLDDITTKNVYDDYKNIYCKRIGYQFMHIHNSNEMNWIKNYIETKHSNILKKKKKIQILKHLIISEMLEKYFSSKFPSIKRFSIEGAESLIPMLKEVIKYTKKFNLHKIIFGMSHRGRLNVLANILDKPIKTIFNEFCENNSNNFNSGDVKYHMGFCCTKTIGLRKIILDLKSNPSHLEVINPVVVGSSRAYIDSNDNLNDENILPIIIHGDAAISGQGVVQELLNMSQARGYKVGGTIHIVVNNQIGFTTSKVKDLRTSQYCTDIAKMIDSPIFHVNADDPESVIFVTHLALNYRFCFKKDVFINLVCYRRHGHNEIDDPSITQPVLYSKIKNHPTTATSYYNKLLLKNIINKSFLITYQKKIKKKLDVEYNLHNKKMSEKRLKCCSIVKADYINVSNTPINNISQSDLTILAKKIFSIPNNIEVHNRVFKIYKDRLKMANNEKLFDWGASELLAYASLLNEGISCRLSGEDVCRGTFFHRHAVIHDQKNDSKYIPLKNIKLKQGNFYIWDSVLSEEATLAFEYGYSIDQKNTLNVWEAQFGDFANGAQIIIDQFICSGEQKWNVTCNLVMLLPHGYEGQGPEHSSARIERYLQLSANNNIKIIIPTISSQIYHIIRKQAFSLIKKPLIIMSPKSLLRFPLAASSLSELSNGKFRTVIDEIDNLDTKKVQRIILCSGKIYYDLLTQRRINQQKNIVILRIEQIYPRPTKKLSAILYNYKDVHDYIWCQEEPCNQGAWLYHKSYLKKLLPKHSKLNYVGRSSSASPATGYMKIHKEQQKKIIYDALNISD.

The protein belongs to the alpha-ketoglutarate dehydrogenase family. In terms of assembly, homodimer. Part of the 2-oxoglutarate dehydrogenase (OGDH) complex composed of E1 (2-oxoglutarate dehydrogenase), E2 (dihydrolipoamide succinyltransferase) and E3 (dihydrolipoamide dehydrogenase); the complex contains multiple copies of the three enzymatic components (E1, E2 and E3). It depends on thiamine diphosphate as a cofactor.

The catalysed reaction is N(6)-[(R)-lipoyl]-L-lysyl-[protein] + 2-oxoglutarate + H(+) = N(6)-[(R)-S(8)-succinyldihydrolipoyl]-L-lysyl-[protein] + CO2. Its function is as follows. E1 component of the 2-oxoglutarate dehydrogenase (OGDH) complex which catalyzes the decarboxylation of 2-oxoglutarate, the first step in the conversion of 2-oxoglutarate to succinyl-CoA and CO(2). This is Oxoglutarate dehydrogenase (sucA) from Buchnera aphidicola subsp. Baizongia pistaciae (strain Bp).